Reading from the N-terminus, the 250-residue chain is uncharacterized protein (250 aa).

A divalent metal cation contacts are provided by glutamate 97, glutamate 99, and aspartate 128.

The protein belongs to the FAH family.

This is an uncharacterized protein from Archaeoglobus fulgidus (strain ATCC 49558 / DSM 4304 / JCM 9628 / NBRC 100126 / VC-16).